We begin with the raw amino-acid sequence, 637 residues long: SCF-associated factor 1 (637 aa).

Positions 14–63 constitute an F-box domain; sequence GLSPDIVQATLPFLSSDDIKNLSQTNKYYNTLLDFDHSKILWHELFHKAF. Phosphoserine is present on Ser16. An RCC1 1 repeat occupies 109-202; it reads AKFYSWGYLK…GFSFQILTES (94 aa). A disordered region spans residues 242 to 315; that stretch reads YPRITSRSNG…RTTMPSMGPH (74 aa). Residues 244-260 are compositionally biased toward polar residues; sequence RITSRSNGSTVNTTGTF. At Ser266 the chain carries Phosphoserine. Low complexity predominate over residues 289-305; the sequence is SGGAPAASPGGSHSGVP. The stretch at 565–635 is one RCC1 2 repeat; it reads GHLYSWGIES…GWQTGALIIK (71 aa).

As to quaternary structure, interacts with AAH1, SKP1 and CDC53. Component of the SCF(SAF1) complex containing CDC53, SKP1, HRT1 and SAF1.

It functions in the pathway protein modification; protein ubiquitination. Substrate recognition component of a SCF (SKP1-CUL1-F-box protein) E3 ubiquitin-protein ligase complex which mediates the ubiquitination and subsequent proteasomal degradation of target proteins. Targets AAH1 adenine deaminase for proteasome-dependent degradation upon entry into quiescence. Targets also URA7. This Saccharomyces cerevisiae (strain ATCC 204508 / S288c) (Baker's yeast) protein is SCF-associated factor 1 (SAF1).